The chain runs to 387 residues: Hydroxycarboxylic acid receptor 3 (387 aa).

Over Met1–Lys28 the chain is Extracellular. A helical transmembrane segment spans residues Val29–Trp50. The Cytoplasmic portion of the chain corresponds to Ile51–Arg63. A helical membrane pass occupies residues Ile64–Asp85. At Tyr86–Leu102 the chain is on the extracellular side. Cys100 and Cys177 are disulfide-bonded. Residues Val103 to Val123 form a helical membrane-spanning segment. Topologically, residues Asp124–Trp142 are cytoplasmic. Residues Thr143–Leu163 traverse the membrane as a helical segment. Over Lys164–Leu194 the chain is Extracellular. Residues Leu195–Ala209 traverse the membrane as a helical segment. The Cytoplasmic portion of the chain corresponds to Arg210–Val236. The helical transmembrane segment at Ala237 to Trp256 threads the bilayer. At Leu257–Asp273 the chain is on the extracellular side. A helical membrane pass occupies residues Leu274–Ser298. The Cytoplasmic segment spans residues Pro299–Glu387. The segment at Gly319–Glu343 is disordered.

This sequence belongs to the G-protein coupled receptor 1 family. As to expression, expression largely restricted to adipose tissue and spleen.

Its subcellular location is the cell membrane. In terms of biological role, receptor for 3-OH-octanoid acid mediates a negative feedback regulation of adipocyte lipolysis to counteract prolipolytic influences under conditions of physiological or pathological increases in beta-oxidation rates. Acts as a low affinity receptor for nicotinic acid. This pharmacological effect requires nicotinic acid doses that are much higher than those provided by a normal diet. The polypeptide is Hydroxycarboxylic acid receptor 3 (HCAR3) (Homo sapiens (Human)).